The sequence spans 461 residues: NADH-ubiquinone oxidoreductase chain 4 (461 aa).

13 consecutive transmembrane segments (helical) span residues 20–42 (PAWL…LTWL), 61–81 (PLST…ILAS), 93–113 (QRSF…AFGA), 114–134 (TEII…LIII), 147–167 (GTYF…ALLM), 197–217 (WTAC…HLWL), 225–245 (PIAG…YGMM), 258–278 (LAYP…SICL), 285–304 (SLIA…GILT), 309–331 (GFTG…FCLA), 351–371 (VILP…LALP), 393–413 (TLTM…HMFL), and 436–456 (LLMT…ELIW).

This sequence belongs to the complex I subunit 4 family.

The protein resides in the mitochondrion membrane. The catalysed reaction is a ubiquinone + NADH + 5 H(+)(in) = a ubiquinol + NAD(+) + 4 H(+)(out). Its function is as follows. Core subunit of the mitochondrial membrane respiratory chain NADH dehydrogenase (Complex I) that is believed to belong to the minimal assembly required for catalysis. Complex I functions in the transfer of electrons from NADH to the respiratory chain. The immediate electron acceptor for the enzyme is believed to be ubiquinone. This chain is NADH-ubiquinone oxidoreductase chain 4 (MT-ND4), found in Latimeria chalumnae (Coelacanth).